Consider the following 288-residue polypeptide: Homeobox protein Hox-B4a (288 aa).

Residues 10 to 136 (SNYVDPKFPP…ASSPASTRKD (127 aa)) form a disordered region. Positions 118-132 (CGQTPHSQGASSPAS) are enriched in polar residues. An Antp-type hexapeptide motif is present at residues 139–144 (VYPWMK). A DNA-binding region (homeobox) is located at residues 160 to 219 (PKRSRTAYTRQQVLELEKEFHYNRYLTRRRRVEIAHTLCLSERQIKIWFQNRRMKWKKDH).

The protein belongs to the Antp homeobox family. Deformed subfamily.

It is found in the nucleus. Its function is as follows. Sequence-specific transcription factor which is part of a developmental regulatory system that provides cells with specific positional identities on the anterior-posterior axis. This is Homeobox protein Hox-B4a (hoxb4a) from Takifugu rubripes (Japanese pufferfish).